The primary structure comprises 386 residues: Ovalbumin (386 aa).

G2 is modified (N-acetylglycine). The residue at position 69 (S69) is a Phosphoserine. A disulfide bridge links C74 with C121. Residue N293 is glycosylated (N-linked (GlcNAc...) asparagine). S345 carries the post-translational modification Phosphoserine.

The protein belongs to the serpin family. Ov-serpin subfamily. In terms of processing, the N-terminus is blocked.

It is found in the secreted. Functionally, storage protein of egg white. Lacks protease inhibitory activity. The protein is Ovalbumin (SERPINB14) of Dromaius novaehollandiae (Emu).